A 316-amino-acid polypeptide reads, in one-letter code: Acetyl-coenzyme A carboxylase carboxyl transferase subunit alpha (316 aa).

One can recognise a CoA carboxyltransferase C-terminal domain in the interval 35–292 (EIEILSQKLE…KTYVLQELKD (258 aa)).

Belongs to the AccA family. In terms of assembly, acetyl-CoA carboxylase is a heterohexamer composed of biotin carboxyl carrier protein (AccB), biotin carboxylase (AccC) and two subunits each of ACCase subunit alpha (AccA) and ACCase subunit beta (AccD).

The protein resides in the cytoplasm. It catalyses the reaction N(6)-carboxybiotinyl-L-lysyl-[protein] + acetyl-CoA = N(6)-biotinyl-L-lysyl-[protein] + malonyl-CoA. It functions in the pathway lipid metabolism; malonyl-CoA biosynthesis; malonyl-CoA from acetyl-CoA: step 1/1. Its function is as follows. Component of the acetyl coenzyme A carboxylase (ACC) complex. First, biotin carboxylase catalyzes the carboxylation of biotin on its carrier protein (BCCP) and then the CO(2) group is transferred by the carboxyltransferase to acetyl-CoA to form malonyl-CoA. The chain is Acetyl-coenzyme A carboxylase carboxyl transferase subunit alpha from Alkaliphilus oremlandii (strain OhILAs) (Clostridium oremlandii (strain OhILAs)).